The sequence spans 392 residues: Bone morphogenetic protein 15 (392 aa).

The first 25 residues, 1-25 (MALLTILRILLWGVVLFMEQRVQMA), serve as a signal peptide directing secretion. The propeptide occupies 26–267 (KPGWPSTALL…ESSFLMRSVR (242 aa)). 5 N-linked (GlcNAc...) asparagine glycosylation sites follow: Asn85, Asn213, Asn236, Asn349, and Asn373. Intrachain disulfides connect Cys291–Cys357, Cys320–Cys389, and Cys324–Cys391.

This sequence belongs to the TGF-beta family. Homodimer. But, in contrast to other members of this family, cannot be disulfide-linked. As to expression, ovary specific.

It localises to the secreted. Its function is as follows. May be involved in follicular development. Oocyte-specific growth/differentiation factor that stimulates folliculogenesis and granulosa cell (GC) growth. The polypeptide is Bone morphogenetic protein 15 (Bmp15) (Mus musculus (Mouse)).